The following is a 312-amino-acid chain: MGWSRKDLLHIEDLPAKEIQLILNTAKPMKEIMSRAVKKLPTFRGKSVYNLFFESSTRTRTSFETAAKILGADTSSLAVAQSSLNKGETLLDTVRTLQAMKPDLVVIRHSSSGAAQFLAKELKAGVINAGDGQHEHPTQALLDLYTMQERLGSVEGRKILLVGDILHSRVARSNVWALKNLGAEVVLVGPPTLLPPEIKSWGVKTTFNLDEELPGSDVIMALRLQLERQQSGLLPSLREYSQLYGITAERVKKTGKQTLIMHPGPVNRGVEIESSIANSSQSVIEEQVTNGVAVRMAIMYLLLGGGTAHVVD.

Carbamoyl phosphate-binding residues include Arg58 and Thr59. Lys86 provides a ligand contact to L-aspartate. Positions 108, 136, and 139 each coordinate carbamoyl phosphate. Residues Arg169 and Arg223 each coordinate L-aspartate. Carbamoyl phosphate-binding residues include Gly264 and Pro265.

The protein belongs to the aspartate/ornithine carbamoyltransferase superfamily. ATCase family. Heterododecamer (2C3:3R2) of six catalytic PyrB chains organized as two trimers (C3), and six regulatory PyrI chains organized as three dimers (R2).

It carries out the reaction carbamoyl phosphate + L-aspartate = N-carbamoyl-L-aspartate + phosphate + H(+). The protein operates within pyrimidine metabolism; UMP biosynthesis via de novo pathway; (S)-dihydroorotate from bicarbonate: step 2/3. Its function is as follows. Catalyzes the condensation of carbamoyl phosphate and aspartate to form carbamoyl aspartate and inorganic phosphate, the committed step in the de novo pyrimidine nucleotide biosynthesis pathway. The polypeptide is Aspartate carbamoyltransferase catalytic subunit (Desulfitobacterium hafniense (strain DSM 10664 / DCB-2)).